A 602-amino-acid polypeptide reads, in one-letter code: uncharacterized protein (602 aa).

This sequence belongs to the glycosyltransferase 2 family.

This is an uncharacterized protein from Rickettsia felis (strain ATCC VR-1525 / URRWXCal2) (Rickettsia azadi).